A 237-amino-acid chain; its full sequence is Ribonuclease PH (237 aa).

Phosphate-binding positions include R86 and 124–126 (GTR).

This sequence belongs to the RNase PH family. Homohexameric ring arranged as a trimer of dimers.

The enzyme catalyses tRNA(n+1) + phosphate = tRNA(n) + a ribonucleoside 5'-diphosphate. Functionally, phosphorolytic 3'-5' exoribonuclease that plays an important role in tRNA 3'-end maturation. Removes nucleotide residues following the 3'-CCA terminus of tRNAs; can also add nucleotides to the ends of RNA molecules by using nucleoside diphosphates as substrates, but this may not be physiologically important. Probably plays a role in initiation of 16S rRNA degradation (leading to ribosome degradation) during starvation. This chain is Ribonuclease PH, found in Coxiella burnetii (strain RSA 331 / Henzerling II).